The following is a 563-amino-acid chain: 5-aminolevulinate synthase, mitochondrial (563 aa).

A mitochondrion-targeting transit peptide spans 1–18; sequence MESLVRQSKKLCPYIGRT. Residues Arg137, Ser251, and Lys270 each contribute to the substrate site. 3 residues coordinate pyridoxal 5'-phosphate: Ser303, His331, and Thr373. Residue Lys376 is part of the active site. Lys376 carries the N6-(pyridoxal phosphate)lysine modification. Residues Thr405 and Thr406 each coordinate pyridoxal 5'-phosphate. A substrate-binding site is contributed by Thr491.

It belongs to the class-II pyridoxal-phosphate-dependent aminotransferase family. As to quaternary structure, homodimer. Requires pyridoxal 5'-phosphate as cofactor.

The protein localises to the mitochondrion matrix. The catalysed reaction is succinyl-CoA + glycine + H(+) = 5-aminolevulinate + CO2 + CoA. It participates in porphyrin-containing compound metabolism; protoporphyrin-IX biosynthesis; 5-aminolevulinate from glycine: step 1/1. Functionally, catalyzes the synthesis of 5-aminolevulinate (ALA) from succinyl-CoA and glycine, the first and rate-limiting step in heme biosynthesis. The sequence is that of 5-aminolevulinate synthase, mitochondrial (HEM1) from Yarrowia lipolytica (strain CLIB 122 / E 150) (Yeast).